Consider the following 917-residue polypeptide: DNA topoisomerase 1 beta (917 aa).

Residues 1–368 (MATEAFVKPV…SLPSGDGQKK (368 aa)) form a disordered region. Residues 32-63 (RNSNTAATTNRPSPINNAMRNSAIGSTKSSPP) show a composition bias toward polar residues. The span at 66-82 (SPLTSPNRSASSSTRSS) shows a compositional bias: low complexity. A compositionally biased stretch (polar residues) spans 89–100 (PSSSSVQRSTLK). Basic and acidic residues-rich tracts occupy residues 102–116 (PLRD…ERNG) and 134–149 (DKPL…KEVT). Over residues 150–170 (KQPSSSGRGSTQQAVQKSNMR) the composition is skewed to polar residues. Residues 177–187 (YTKKKVLDERA) are compositionally biased toward basic and acidic residues. Residues 189-205 (MSSTVQTKTSVGTSSSK) are compositionally biased toward polar residues. Composition is skewed to basic and acidic residues over residues 256-265 (KLSEPARPVK) and 296-307 (VKEDNSDGDDHV). Serine 301 is subject to Phosphoserine. Positions 316–338 (DSSNNKSSSAKPSSSKMIASSSR) are enriched in low complexity. Interaction with DNA regions lie at residues 575-576 (KY), 638-643 (RAGNEK), and 729-731 (TAK). A Topo IB-type catalytic domain is found at 582-912 (SSSLKGQSDK…MDVDPEFRFC (331 aa)). Residues 779–858 (VSKSHGAQVE…ERDMQTKEDM (80 aa)) are a coiled coil. The active-site O-(3'-phospho-DNA)-tyrosine intermediate is tyrosine 870.

Belongs to the type IB topoisomerase family.

Its subcellular location is the nucleus. The enzyme catalyses ATP-independent breakage of single-stranded DNA, followed by passage and rejoining.. Its function is as follows. Releases the supercoiling and torsional tension of DNA introduced during the DNA replication and transcription by transiently cleaving and rejoining one strand of the DNA duplex. Introduces a single-strand break via transesterification at a target site in duplex DNA. The scissile phosphodiester is attacked by the catalytic tyrosine of the enzyme, resulting in the formation of a DNA-(3'-phosphotyrosyl)-enzyme intermediate and the expulsion of a 5'-OH DNA strand. The free DNA strand then rotates around the intact phosphodiester bond on the opposing strand, thus removing DNA supercoils. Finally, in the religation step, the DNA 5'-OH attacks the covalent intermediate to expel the active-site tyrosine and restore the DNA phosphodiester backbone. Topoisomerases 1 enzymes (TOP1A and TOP1B) are essential for plant survival. This is DNA topoisomerase 1 beta from Arabidopsis thaliana (Mouse-ear cress).